The following is a 303-amino-acid chain: RELT-like protein 2 (303 aa).

The chain crosses the membrane as a helical span at residues 15–35; the sequence is LYMLFLLVLVFFLMGLVGFMI. 2 disordered regions span residues 46 to 67 and 132 to 303; these read CRTS…DDDM and CLHC…AGSM. The residue at position 52 (Ser-52) is a Phosphoserine. Composition is skewed to basic and acidic residues over residues 148–158 and 172–188; these read RSKEGKSRPRT and THIE…DGSP. Positions 194–212 are enriched in gly residues; that stretch reads GSGGGQDPGGGQGSGGGQP. Polar residues predominate over residues 278 to 296; the sequence is QEANGQPSKPDTSDHQVSL.

The protein belongs to the RELT family. In terms of assembly, interacts with RELT, RELL1 and OXSR1. Interacts with PLSCR1. Interacts with TRAF2. In terms of processing, phosphorylated in vitro by OXSR1. In terms of tissue distribution, primarily expressed in spleen, thymus, testis, peripheral blood leukocytes, brain and placenta. Not detected in prostate, ovary, small intestine, colon, heart, lung, liver, skeletal muscle, kidney and pancreas.

The protein localises to the cell membrane. Induces activation of MAPK14/p38 cascade, when overexpressed. Induces apoptosis, when overexpressed. The sequence is that of RELT-like protein 2 (RELL2) from Homo sapiens (Human).